The following is a 2849-amino-acid chain: Immunoglobulin-like and fibronectin type III domain-containing protein 1 (2849 aa).

The segment at Ala82–Leu108 is disordered. A compositionally biased stretch (low complexity) spans Gly90 to Ser101. Residues Pro187–Thr277 enclose the Ig-like 1 domain. The stretch at Ile347–His380 forms a coiled coil. The 90-residue stretch at Pro468 to Gly557 folds into the Ig-like 2 domain. 12 disordered regions span residues Leu577–Leu600, Val652–Arg760, Tyr864–Ser924, Val962–Gln981, Glu1061–Ala1103, Thr1221–Gly1258, Ser1312–His1338, Arg1350–Glu1384, Glu1498–Glu1523, Glu1654–Ile1675, Gln1724–His1780, and Gly1827–His2055. Residues His717–Arg742 show a composition bias toward basic and acidic residues. A compositionally biased stretch (polar residues) spans Gly866–Ser880. The span at Arg1070–Gly1084 shows a compositional bias: gly residues. Residues Ser1873 to Leu1882 are compositionally biased toward polar residues. Basic and acidic residues-rich tracts occupy residues Ser1988 to Gln2004 and Ser2012 to Ser2021. The Ig-like 3 domain maps to Pro2034–Thr2137. 3 Fibronectin type-III domains span residues Pro2244 to Glu2339, Pro2344 to Pro2443, and Pro2445 to Ala2540. In terms of domain architecture, Ig-like 4 spans Pro2544–Thr2628. A Fibronectin type-III 4 domain is found at Ala2641–Gln2735. One can recognise an Ig-like 5 domain in the interval Pro2749–Thr2845.

Interacts with FLNC. Interacts with KY. As to expression, isoform 1, isoform 3 and isoform 4 are expressed in skeletal muscle while isoform 2 is detected in both skeletal muscle and heart (at protein level).

It localises to the nucleus. The protein localises to the cytoplasm. Its subcellular location is the myofibril. The protein resides in the sarcomere. It is found in the z line. In Mus musculus (Mouse), this protein is Immunoglobulin-like and fibronectin type III domain-containing protein 1 (Igfn1).